Reading from the N-terminus, the 257-residue chain is Imidazole glycerol phosphate synthase subunit HisF (257 aa).

Catalysis depends on residues Asp11 and Asp130.

This sequence belongs to the HisA/HisF family. Heterodimer of HisH and HisF.

Its subcellular location is the cytoplasm. It carries out the reaction 5-[(5-phospho-1-deoxy-D-ribulos-1-ylimino)methylamino]-1-(5-phospho-beta-D-ribosyl)imidazole-4-carboxamide + L-glutamine = D-erythro-1-(imidazol-4-yl)glycerol 3-phosphate + 5-amino-1-(5-phospho-beta-D-ribosyl)imidazole-4-carboxamide + L-glutamate + H(+). It participates in amino-acid biosynthesis; L-histidine biosynthesis; L-histidine from 5-phospho-alpha-D-ribose 1-diphosphate: step 5/9. In terms of biological role, IGPS catalyzes the conversion of PRFAR and glutamine to IGP, AICAR and glutamate. The HisF subunit catalyzes the cyclization activity that produces IGP and AICAR from PRFAR using the ammonia provided by the HisH subunit. The chain is Imidazole glycerol phosphate synthase subunit HisF from Shewanella sp. (strain MR-7).